The sequence spans 473 residues: Reticulon-4 receptor (473 aa).

The first 26 residues, 1–26 (MKRASSGGSRLLAWVLWLQAWRVATP), serve as a signal peptide directing secretion. Disulfide bonds link C27-C33 and C31-C43. The LRRNT domain maps to 27–57 (CPGACVCYNEPKVTTSCPQQGLQAVPTGIPA). 8 LRR repeats span residues 58-79 (SSQRIFLHGNRISHVPAASFQS), 82-103 (NLTILWLHSNALARIDAAAFTG), 106-128 (LLEQLDLSDNAQLHVVDPTTFHG), 131-152 (HLHTLHLDRCGLRELGPGLFRG), 155-176 (ALQYLYLQDNNLQALPDNTFRD), 179-200 (NLTHLFLHGNRIPSVPEHAFRG), 203-224 (SLDRLLLHQNHVARVHPHAFRD), and 227-248 (RLMTLYLFANNLSMLPAEVLMP). An N-linked (GlcNAc...) asparagine glycan is attached at N82. N179 carries N-linked (GlcNAc...) asparagine glycosylation. One can recognise an LRRCT domain in the interval 260–311 (NPWVCDCRARPLWAWLQKFRGSSSEVPCNLPQRLADRDLKRLAASDLEGCAV). 3 disulfides stabilise this stretch: C264-C287, C266-C335, and C309-C336. The disordered stretch occupies residues 346–446 (VLEPGRPASA…GASGTGDAEG (101 aa)). N-linked (GlcNAc...) asparagine glycosylation occurs at N372. Positions 413 to 429 (PRRRPGCSRKNRTRSHC) are enriched in basic residues. Positions 434–445 (AGSGASGTGDAE) are enriched in gly residues. The GPI-anchor amidated serine moiety is linked to residue S447. Positions 448–473 (GALPALACSLAPLGLALVLWTVLGPC) are cleaved as a propeptide — removed in mature form.

The protein belongs to the Nogo receptor family. Homodimer. Interacts with MAG. Interacts with RTN4. Interacts with NGFR. Interacts with LINGO1. Interacts with KIAA0319L. Interacts with OLFM1; this inhibits interaction with LINGO1 and NGFR. Interacts with OMG. N-glycosylated. O-glycosylated. Contains terminal sialic acid groups on its glycan chains. As to expression, detected in embryonic hippocampus neurons. Detected in brain (at protein level). Detected in neurons in the neocortex, in hippocampus, dorsal thalamus, cerebellum granule cell layer and the mitral cell layer in the olfactory bulb. Detected in brain, dorsal root ganglion and heart.

The protein localises to the cell membrane. It localises to the membrane raft. Its subcellular location is the cell projection. The protein resides in the dendrite. It is found in the axon. The protein localises to the perikaryon. Its function is as follows. Receptor for RTN4, OMG and MAG. Functions as a receptor for the sialylated gangliosides GT1b and GM1. Besides, functions as a receptor for chondroitin sulfate proteoglycans. Can also bind heparin. Intracellular signaling cascades are triggered via the coreceptor NGFR. Signaling mediates activation of Rho and downstream reorganization of the actin cytoskeleton. Mediates axonal growth inhibition. Mediates axonal growth inhibition and plays a role in regulating axon regeneration and neuronal plasticity in the adult central nervous system. Plays a role in postnatal brain development. Required for normal axon migration across the brain midline and normal formation of the corpus callosum. Protects motoneurons against apoptosis; protection against apoptosis is probably mediated via interaction with MAG. Acts in conjunction with RTN4 and LINGO1 in regulating neuronal precursor cell motility during cortical development. Like other family members, plays a role in restricting the number dendritic spines and the number of synapses that are formed during brain development. This chain is Reticulon-4 receptor (Rtn4r), found in Mus musculus (Mouse).